Here is a 200-residue protein sequence, read N- to C-terminus: NADH-quinone oxidoreductase subunit I 1 (200 aa).

2 4Fe-4S ferredoxin-type domains span residues 52–82 (LNRHPDGLEKCVGCELCAWACPADAIYVEGA) and 98–127 (RVYQINYARCILCGLCIEACPTRALTMTNE). [4Fe-4S] cluster contacts are provided by Cys62, Cys65, Cys68, Cys72, Cys107, Cys110, Cys113, and Cys117. A disordered region spans residues 181–200 (TERQVAVSKGEKPQDEGVEA). Residues 189–200 (KGEKPQDEGVEA) are compositionally biased toward basic and acidic residues.

This sequence belongs to the complex I 23 kDa subunit family. NDH-1 is composed of 14 different subunits. Subunits NuoA, H, J, K, L, M, N constitute the membrane sector of the complex. It depends on [4Fe-4S] cluster as a cofactor.

The protein resides in the cell membrane. It carries out the reaction a quinone + NADH + 5 H(+)(in) = a quinol + NAD(+) + 4 H(+)(out). Functionally, NDH-1 shuttles electrons from NADH, via FMN and iron-sulfur (Fe-S) centers, to quinones in the respiratory chain. The immediate electron acceptor for the enzyme in this species is believed to be ubiquinone. Couples the redox reaction to proton translocation (for every two electrons transferred, four hydrogen ions are translocated across the cytoplasmic membrane), and thus conserves the redox energy in a proton gradient. This chain is NADH-quinone oxidoreductase subunit I 1, found in Streptomyces avermitilis (strain ATCC 31267 / DSM 46492 / JCM 5070 / NBRC 14893 / NCIMB 12804 / NRRL 8165 / MA-4680).